We begin with the raw amino-acid sequence, 426 residues long: Glutamate-1-semialdehyde 2,1-aminomutase (426 aa).

Position 265 is an N6-(pyridoxal phosphate)lysine (Lys-265).

This sequence belongs to the class-III pyridoxal-phosphate-dependent aminotransferase family. HemL subfamily. Homodimer. The cofactor is pyridoxal 5'-phosphate.

The protein resides in the cytoplasm. It catalyses the reaction (S)-4-amino-5-oxopentanoate = 5-aminolevulinate. Its pathway is porphyrin-containing compound metabolism; protoporphyrin-IX biosynthesis; 5-aminolevulinate from L-glutamyl-tRNA(Glu): step 2/2. This Pectobacterium carotovorum subsp. carotovorum (strain PC1) protein is Glutamate-1-semialdehyde 2,1-aminomutase.